Reading from the N-terminus, the 315-residue chain is DNA-directed RNA polymerase subunit alpha (315 aa).

Residues 1 to 228 (MLEIEKPKIE…EHFKLFMTLT (228 aa)) are alpha N-terminal domain (alpha-NTD). Positions 245 to 315 (KEKVLEMTIE…LGLGLRKSED (71 aa)) are alpha C-terminal domain (alpha-CTD).

Belongs to the RNA polymerase alpha chain family. As to quaternary structure, homodimer. The RNAP catalytic core consists of 2 alpha, 1 beta, 1 beta' and 1 omega subunit. When a sigma factor is associated with the core the holoenzyme is formed, which can initiate transcription.

The catalysed reaction is RNA(n) + a ribonucleoside 5'-triphosphate = RNA(n+1) + diphosphate. DNA-dependent RNA polymerase catalyzes the transcription of DNA into RNA using the four ribonucleoside triphosphates as substrates. The chain is DNA-directed RNA polymerase subunit alpha from Clostridium botulinum (strain Langeland / NCTC 10281 / Type F).